We begin with the raw amino-acid sequence, 156 residues long: Calcium-binding protein A (156 aa).

EF-hand domains follow at residues 4–39 (AITKDVEDMLRKFDSNGDGNITFDEAVKRLKETGSK), 40–75 (DPLRAASSMFISLDKDKDGIISIKEIHGHKADVAAK), 80–115 (AINNICNNFLKGYDTDKDGRISWDEVCNWVNKNNPD), and 118–153 (APLMIVENFFSELDKDNDRFVTKCELQEYVTKYKSL). Aspartate 17, asparagine 19, aspartate 21, asparagine 23, glutamate 28, aspartate 53, aspartate 55, aspartate 57, glutamate 64, aspartate 93, aspartate 95, aspartate 97, arginine 99, glutamate 104, aspartate 131, aspartate 133, aspartate 135, and glutamate 142 together coordinate Ca(2+).

The chain is Calcium-binding protein A (cbpA) from Dictyostelium discoideum (Social amoeba).